Reading from the N-terminus, the 116-residue chain is Large ribosomal subunit protein bL20c (116 aa).

It belongs to the bacterial ribosomal protein bL20 family.

It is found in the plastid. The protein resides in the chloroplast. Binds directly to 23S ribosomal RNA and is necessary for the in vitro assembly process of the 50S ribosomal subunit. It is not involved in the protein synthesizing functions of that subunit. In Ipomoea purpurea (Common morning glory), this protein is Large ribosomal subunit protein bL20c.